The following is a 774-amino-acid chain: Glycophorin-binding protein 130 (774 aa).

The PEXEL motif signature appears at 84 to 88 (RILAE). Disordered stretches follow at residues 97–243 (EKTT…AADP), 256–291 (LTNT…EYAS), 310–334 (DPND…PEGQ), 358–383 (NTDP…DPEG), 410–434 (DPND…PEGQ), 458–481 (NTDP…SDPE), 509–533 (DPND…PEGQ), 609–632 (DPND…DPEG), 661–682 (NDEV…DPEG), and 709–734 (DPND…EGQI). Basic and acidic residues-rich tracts occupy residues 117 to 140 (TKKD…SEKQ) and 174 to 198 (KKEE…EPKA). Positions 201 to 228 (VSQKPSTSTRSNNEVKIRAASNQETLTS) are enriched in polar residues. 11 GBP repeats span residues 226–275 (LTSA…NKED), 276–325 (LTSA…NKED), 326–375 (LTSA…NKED), 376–425 (LTSA…NKED), 426–474 (LTSA…DNKE), 475–524 (LTSS…NKED), 525–574 (LTSA…NKEE), 575–624 (LTSS…NKED), 625–674 (LTSA…NKED), 675–724 (LTSA…NKED), and 725–774 (LTSA…NNEA). Composition is skewed to basic and acidic residues over residues 264–276 (EVER…KEDL), 314–326 (DVER…KEDL), 364–376 (EVER…KEDL), 414–426 (EVER…KEDL), 464–476 (EVER…KELT), 513–525 (EVER…KEDL), 613–625 (EVER…KEDL), 663–675 (EVER…KEDL), and 713–725 (DVER…KEDL).

As to quaternary structure, interacts with host glycophorin.

The protein resides in the secreted. It localises to the cell surface. It is found in the host cytoplasm. Functionally, involved in merozoite invasion of host erythrocytes. The protein is Glycophorin-binding protein 130 of Plasmodium falciparum (isolate FCR-3 / Gambia).